A 192-amino-acid chain; its full sequence is Inosine triphosphate pyrophosphatase (192 aa).

Position 10–15 (10–15 (TGNANK)) interacts with ITP. Glu46 lines the Mg(2+) pocket. ITP-binding positions include Lys58, 74 to 75 (DT), Lys91, 149 to 152 (FGWD), Lys172, and 177 to 178 (HR).

This sequence belongs to the HAM1 NTPase family. As to quaternary structure, homodimer. It depends on Mg(2+) as a cofactor. Mn(2+) is required as a cofactor.

It localises to the cytoplasm. Its subcellular location is the nucleus. The catalysed reaction is ITP + H2O = IMP + diphosphate + H(+). The enzyme catalyses dITP + H2O = dIMP + diphosphate + H(+). It carries out the reaction XTP + H2O = XMP + diphosphate + H(+). Its function is as follows. Pyrophosphatase that hydrolyzes non-canonical purine nucleotides such as inosine triphosphate (ITP), deoxyinosine triphosphate (dITP) or xanthosine 5'-triphosphate (XTP) to their respective monophosphate derivatives. The enzyme does not distinguish between the deoxy- and ribose forms. Probably excludes non-canonical purines from RNA and DNA precursor pools, thus preventing their incorporation into RNA and DNA and avoiding chromosomal lesions. This Puccinia graminis f. sp. tritici (strain CRL 75-36-700-3 / race SCCL) (Black stem rust fungus) protein is Inosine triphosphate pyrophosphatase.